We begin with the raw amino-acid sequence, 334 residues long: Holliday junction branch migration complex subunit RuvB (334 aa).

The interval 4 to 186 (ADRLIAPENP…FGITQRLEYY (183 aa)) is large ATPase domain (RuvB-L). ATP is bound by residues isoleucine 25, arginine 26, glycine 67, lysine 70, threonine 71, threonine 72, 133–135 (EDY), arginine 176, tyrosine 186, and arginine 223. Threonine 71 lines the Mg(2+) pocket. Positions 187–257 (KVKDLQDIVQ…TADKALNMLD (71 aa)) are small ATPAse domain (RuvB-S). A head domain (RuvB-H) region spans residues 260 to 334 (AEGFDYMDRK…RAYLHFGIEK (75 aa)). Arginine 315 and arginine 320 together coordinate DNA.

Belongs to the RuvB family. Homohexamer. Forms an RuvA(8)-RuvB(12)-Holliday junction (HJ) complex. HJ DNA is sandwiched between 2 RuvA tetramers; dsDNA enters through RuvA and exits via RuvB. An RuvB hexamer assembles on each DNA strand where it exits the tetramer. Each RuvB hexamer is contacted by two RuvA subunits (via domain III) on 2 adjacent RuvB subunits; this complex drives branch migration. In the full resolvosome a probable DNA-RuvA(4)-RuvB(12)-RuvC(2) complex forms which resolves the HJ.

It is found in the cytoplasm. The catalysed reaction is ATP + H2O = ADP + phosphate + H(+). Functionally, the RuvA-RuvB-RuvC complex processes Holliday junction (HJ) DNA during genetic recombination and DNA repair, while the RuvA-RuvB complex plays an important role in the rescue of blocked DNA replication forks via replication fork reversal (RFR). RuvA specifically binds to HJ cruciform DNA, conferring on it an open structure. The RuvB hexamer acts as an ATP-dependent pump, pulling dsDNA into and through the RuvAB complex. RuvB forms 2 homohexamers on either side of HJ DNA bound by 1 or 2 RuvA tetramers; 4 subunits per hexamer contact DNA at a time. Coordinated motions by a converter formed by DNA-disengaged RuvB subunits stimulates ATP hydrolysis and nucleotide exchange. Immobilization of the converter enables RuvB to convert the ATP-contained energy into a lever motion, pulling 2 nucleotides of DNA out of the RuvA tetramer per ATP hydrolyzed, thus driving DNA branch migration. The RuvB motors rotate together with the DNA substrate, which together with the progressing nucleotide cycle form the mechanistic basis for DNA recombination by continuous HJ branch migration. Branch migration allows RuvC to scan DNA until it finds its consensus sequence, where it cleaves and resolves cruciform DNA. This chain is Holliday junction branch migration complex subunit RuvB, found in Vibrio campbellii (strain ATCC BAA-1116).